Reading from the N-terminus, the 802-residue chain is LPS-assembly protein LptD (802 aa).

Positions 1–25 are cleaved as a signal peptide; that stretch reads MARLFSLKPLVLALGLCFGTHCAAA.

It belongs to the LptD family. Component of the lipopolysaccharide transport and assembly complex. Interacts with LptE and LptA.

The protein resides in the cell outer membrane. Its function is as follows. Together with LptE, is involved in the assembly of lipopolysaccharide (LPS) at the surface of the outer membrane. This is LPS-assembly protein LptD from Neisseria meningitidis serogroup B (strain ATCC BAA-335 / MC58).